Here is a 217-residue protein sequence, read N- to C-terminus: Formate dehydrogenase, nitrate-inducible, cytochrome b556(Fdn) subunit (217 aa).

Over 1–11 the chain is Cytoplasmic; the sequence is MSKSKMIVRTK. A helical transmembrane segment spans residues 12–36; sequence FIDRACHWTVVICFFLVALSGISFF. Residue His18 coordinates heme b. Residues 37–52 are Periplasmic-facing; the sequence is FPTLQWLTQTFGTPQM. The helical transmembrane segment at 53-74 threads the bilayer; the sequence is GRILHPFFGIAIFVALMFMFVR. A heme b-binding site is contributed by His57. Residues 75 to 110 lie on the Cytoplasmic side of the membrane; that stretch reads FVHHNIPDKKDIPWLLNIVEVLKGNEHKVADVGKYN. The chain crosses the membrane as a helical span at residues 111–134; sequence AGQKMMFWSIMSMIFVLLVTGVII. Over 135-150 the chain is Periplasmic; that stretch reads WRPYFAQYFPMQVVRY. Residues 151–175 traverse the membrane as a helical segment; that stretch reads SLLIHAAAGIILIHAILIHMYMAFW. Residues His155 and His169 each contribute to the heme b site. His169 is an a menaquinone binding site. Residues 176 to 217 lie on the Cytoplasmic side of the membrane; that stretch reads VKGSIKGMIEGKVSRRWAKKHHPRWYREIEKAEAKKESEEGI.

It belongs to the formate dehydrogenase gamma subunit family. Trimer of heterotrimers, consisting of subunits alpha, beta and gamma. Heme is required as a cofactor.

The protein resides in the cell inner membrane. In terms of biological role, formate dehydrogenase allows the bacterium to use formate as major electron donor during anaerobic respiration, when nitrate is used as electron acceptor. Subunit gamma is the cytochrome b556 component of the formate dehydrogenase-N, and also contains a menaquinone reduction site that receives electrons from the beta subunit (FdnH), through its hemes. Formate dehydrogenase-N is part of a system that generates proton motive force, together with the dissimilatory nitrate reductase (Nar). In Escherichia coli O157:H7, this protein is Formate dehydrogenase, nitrate-inducible, cytochrome b556(Fdn) subunit (fdnI).